The primary structure comprises 206 residues: Pyridoxine/pyridoxamine 5'-phosphate oxidase (206 aa).

FMN-binding positions include 49-54 (RMVLLK), 69-70 (YT), Lys-76, and Gln-98. Position 54 (Lys-54) interacts with substrate. Tyr-116, Arg-120, and Ser-124 together coordinate substrate. FMN-binding positions include 133–134 (QS) and Trp-177. 183–185 (RLH) provides a ligand contact to substrate. Residue Arg-187 participates in FMN binding.

Belongs to the pyridoxamine 5'-phosphate oxidase family. As to quaternary structure, homodimer. The cofactor is FMN.

The enzyme catalyses pyridoxamine 5'-phosphate + O2 + H2O = pyridoxal 5'-phosphate + H2O2 + NH4(+). It catalyses the reaction pyridoxine 5'-phosphate + O2 = pyridoxal 5'-phosphate + H2O2. Its pathway is cofactor metabolism; pyridoxal 5'-phosphate salvage; pyridoxal 5'-phosphate from pyridoxamine 5'-phosphate: step 1/1. The protein operates within cofactor metabolism; pyridoxal 5'-phosphate salvage; pyridoxal 5'-phosphate from pyridoxine 5'-phosphate: step 1/1. Its function is as follows. Catalyzes the oxidation of either pyridoxine 5'-phosphate (PNP) or pyridoxamine 5'-phosphate (PMP) into pyridoxal 5'-phosphate (PLP). The polypeptide is Pyridoxine/pyridoxamine 5'-phosphate oxidase (Jannaschia sp. (strain CCS1)).